Reading from the N-terminus, the 79-residue chain is Acyl carrier protein (79 aa).

The Carrier domain maps to 2-77 (SSIEDRVKKI…QAVDYIKKHL (76 aa)). Serine 37 is subject to O-(pantetheine 4'-phosphoryl)serine.

The protein belongs to the acyl carrier protein (ACP) family. In terms of processing, 4'-phosphopantetheine is transferred from CoA to a specific serine of apo-ACP by AcpS. This modification is essential for activity because fatty acids are bound in thioester linkage to the sulfhydryl of the prosthetic group.

The protein resides in the cytoplasm. It participates in lipid metabolism; fatty acid biosynthesis. In terms of biological role, carrier of the growing fatty acid chain in fatty acid biosynthesis. This chain is Acyl carrier protein, found in Halorhodospira halophila (strain DSM 244 / SL1) (Ectothiorhodospira halophila (strain DSM 244 / SL1)).